Consider the following 109-residue polypeptide: Spermidine export protein MdtI (109 aa).

The next 4 helical transmembrane spans lie at 6–26 (WVHA…NVFL), 36–56 (FYGI…SQAV), 64–84 (AYAL…WVLF), and 88–108 (LNNK…MIKL).

This sequence belongs to the drug/metabolite transporter (DMT) superfamily. Small multidrug resistance (SMR) (TC 2.A.7.1) family. MdtI subfamily. In terms of assembly, forms a complex with MdtJ.

Its subcellular location is the cell inner membrane. In terms of biological role, catalyzes the excretion of spermidine. The sequence is that of Spermidine export protein MdtI from Citrobacter koseri (strain ATCC BAA-895 / CDC 4225-83 / SGSC4696).